The sequence spans 485 residues: Benzaldehyde dehydrogenase YfmT (485 aa).

231–236 (GSTKVG) serves as a coordination point for NAD(+). Catalysis depends on residues Glu-253 and Cys-287.

The protein belongs to the aldehyde dehydrogenase family.

The catalysed reaction is benzaldehyde + NAD(+) + H2O = benzoate + NADH + 2 H(+). The enzyme catalyses vanillin + NAD(+) + H2O = vanillate + NADH + 2 H(+). Functionally, a benzaldehyde dehydrogenase able to act on substrates with 3- and 4-hydroxy and methoxy substitutions; converts vanillin (4-hydroxy-3-methoxybenzaldehyde) to vanillic acid in vitro. The physiological substrate is unknown. The protein is Benzaldehyde dehydrogenase YfmT (yfmT) of Bacillus subtilis (strain 168).